The following is a 142-amino-acid chain: Small ribosomal subunit protein uS12 (142 aa).

The disordered stretch occupies residues 1–43 (MPTFNQLVRKGRKVIEKKSNSPALQKGFNSKKKKPTDVNSPQK). Residue aspartate 102 is modified to 3-methylthioaspartic acid.

It belongs to the universal ribosomal protein uS12 family. As to quaternary structure, part of the 30S ribosomal subunit. Contacts proteins S8 and S17. May interact with IF1 in the 30S initiation complex.

Functionally, with S4 and S5 plays an important role in translational accuracy. In terms of biological role, interacts with and stabilizes bases of the 16S rRNA that are involved in tRNA selection in the A site and with the mRNA backbone. Located at the interface of the 30S and 50S subunits, it traverses the body of the 30S subunit contacting proteins on the other side and probably holding the rRNA structure together. The combined cluster of proteins S8, S12 and S17 appears to hold together the shoulder and platform of the 30S subunit. This is Small ribosomal subunit protein uS12 from Ruminiclostridium cellulolyticum (strain ATCC 35319 / DSM 5812 / JCM 6584 / H10) (Clostridium cellulolyticum).